The following is a 1096-amino-acid chain: Protein transport protein SEC24 B (1096 aa).

Residues 1–315 are disordered; sequence MAAPVPPGAY…SAPGTPGSIY (315 aa). Over residues 12-23 the composition is skewed to low complexity; that stretch reads PNNNQQNSGGPP. Residues 27–45 are compositionally biased toward polar residues; sequence PGSQGNPNSLAANMQNLNI. Positions 47-64 are enriched in pro residues; it reads RPPPPMPGSGPRPSPPFG. Residues 65-78 show a composition bias toward low complexity; the sequence is QSPQSFPQQQQQQP. The span at 79–92 shows a compositional bias: pro residues; the sequence is RPSPMARPGPPPPA. Low complexity predominate over residues 93 to 107; it reads AMARPGGPPQVSQPG. Residues 108–122 show a composition bias toward pro residues; the sequence is GFPPVGRPVAPPSNQ. The span at 140–149 shows a compositional bias: low complexity; sequence SFPQPGGFPA. Pro residues-rich tracts occupy residues 150–160, 171–186, 246–258, and 287–303; these read SGPPGGVPSGP, SPPP…PPSG, MAPP…PPNA, and GRPP…PPQQ. Zn(2+)-binding residues include cysteine 433, cysteine 436, cysteine 455, and cysteine 458. The interval 433–458 is zinc finger-like; the sequence is CSRCKGYVNPFMKFIDQGRKFICNLC.

The protein belongs to the SEC23/SEC24 family. SEC24 subfamily. As to quaternary structure, component of the coat protein complex II (COPII), composed of at least five proteins: the Sec23/24 complex, the Sec13/31 complex and Sar1. In terms of tissue distribution, mainly expressed in pollen, roots, stems, petioles and hypocotyls, and, to a lower extent, in leaves and cotyledons.

It is found in the cytoplasmic vesicle. It localises to the COPII-coated vesicle membrane. The protein resides in the endoplasmic reticulum membrane. The protein localises to the golgi apparatus membrane. Functionally, component of the coat protein complex II (COPII), that covers ER-derived vesicles involved in transport from the endoplasmic reticulum to the Golgi apparatus. COPII is composed of at least five proteins: the SEC23/24 complex, the SEC13/31 complex, and the protein SAR1. Acts in the cytoplasm to promote the transport of secretory, plasma membrane, and vacuolar proteins from the endoplasmic reticulum to the Golgi complex. The polypeptide is Protein transport protein SEC24 B (Arabidopsis thaliana (Mouse-ear cress)).